The sequence spans 147 residues: UPF0735 ACT domain-containing protein GTNG_2535 (147 aa).

An ACT domain is found at 69–144 (TLFFHLEDRS…FVEKVEIVGS (76 aa)).

Belongs to the UPF0735 family.

In Geobacillus thermodenitrificans (strain NG80-2), this protein is UPF0735 ACT domain-containing protein GTNG_2535.